The primary structure comprises 292 residues: Transcription factor-like protein DPA (292 aa).

The disordered stretch occupies residues 1-25 (MSMEMELFVTPEKQRQHPSVSVEKT). Residues 51-135 (GGGLRQFSVM…KKEIRWKGLP (85 aa)) mediate DNA binding. The short motif at 101 to 135 (NEKNIRRRVYDALNVFMALDIIARDKKEIRWKGLP) is the DEF box element. Positions 163-184 (LKELREKVSSLESLMSRNQEMV) form a coiled coil. A disordered region spans residues 246 to 280 (QEQNRVSSSSSTHHQSQHSSAHSSSSSCIASGTSG). Residues 252–280 (SSSSSTHHQSQHSSAHSSSSSCIASGTSG) show a composition bias toward low complexity.

It belongs to the E2F/DP family. In terms of assembly, heterodimer with E2F. Interacts preferentially with E2FA and E2FB, but also with E2FC. As to expression, strongly expressed in the actively dividing tissues of the shoot apical meristem, young leaf primordia, the vascular tissues of the maturing leaf primordia and axillary buds.

It localises to the cytoplasm. The protein resides in the nucleus. Involved in the regulation of the G1/S transition. Increases the DNA binding and the transactivation activities of E2F proteins after heterodimerization. The complex DPA/E2FA promotes cell division and acts as a regulator of the endocycle. Positively regulates the activity of S phase-specific genes. In Arabidopsis thaliana (Mouse-ear cress), this protein is Transcription factor-like protein DPA (DPA).